A 109-amino-acid polypeptide reads, in one-letter code: Hainantoxin-XVIII-2 (109 aa).

Residues 1–18 form the signal peptide; it reads MKLSIIIIATSLVIAVVA. Residues 19–46 constitute a propeptide that is removed on maturation; it reads FPSKDSKAIENDKTEQRMEIVVQETARA. 3 cysteine pairs are disulfide-bonded: Cys47–Cys62, Cys59–Cys108, and Cys61–Cys81.

The protein belongs to the neurotoxin 25 family. F7 subfamily. Expressed by the venom gland.

It is found in the secreted. Functionally, putative ion channel inhibitor. The sequence is that of Hainantoxin-XVIII-2 from Cyriopagopus hainanus (Chinese bird spider).